The chain runs to 260 residues: Proteasome assembly chaperone 2 (260 aa).

This sequence belongs to the PSMG2 family. Forms a heterodimer with psmg1. In terms of processing, degraded by the proteasome upon completion of 20S proteasome maturation.

The protein localises to the nucleus. Functionally, chaperone protein which promotes assembly of the 20S proteasome as part of a heterodimer with psmg1. The polypeptide is Proteasome assembly chaperone 2 (Danio rerio (Zebrafish)).